The primary structure comprises 279 residues: 5'-nucleotidase SurE 1 (279 aa).

A divalent metal cation-binding residues include D12, D13, S45, and N103.

The protein belongs to the SurE nucleotidase family. A divalent metal cation serves as cofactor.

The protein localises to the cytoplasm. The enzyme catalyses a ribonucleoside 5'-phosphate + H2O = a ribonucleoside + phosphate. Functionally, nucleotidase that shows phosphatase activity on nucleoside 5'-monophosphates. The chain is 5'-nucleotidase SurE 1 from Chlamydia caviae (strain ATCC VR-813 / DSM 19441 / 03DC25 / GPIC) (Chlamydophila caviae).